A 117-amino-acid chain; its full sequence is Immunoglobulin kappa variable 1-33 (117 aa).

A signal peptide spans Met1–Cys22. Residues Asp23–Cys45 form a framework-1 region. An Ig-like domain is found at Ile24–Pro117. A disulfide bridge connects residues Cys45 and Cys110. Residues Gln46–Asn56 form a complementarity-determining-1 region. Residues Trp57 to Tyr71 are framework-2. Residues Asp72 to Thr78 are complementarity-determining-2. The interval Gly79 to Cys110 is framework-3. A complementarity-determining-3 region spans residues Gln111–Pro117.

Immunoglobulins are composed of two identical heavy chains and two identical light chains; disulfide-linked.

Its subcellular location is the secreted. The protein localises to the cell membrane. Functionally, v region of the variable domain of immunoglobulin light chains that participates in the antigen recognition. Immunoglobulins, also known as antibodies, are membrane-bound or secreted glycoproteins produced by B lymphocytes. In the recognition phase of humoral immunity, the membrane-bound immunoglobulins serve as receptors which, upon binding of a specific antigen, trigger the clonal expansion and differentiation of B lymphocytes into immunoglobulins-secreting plasma cells. Secreted immunoglobulins mediate the effector phase of humoral immunity, which results in the elimination of bound antigens. The antigen binding site is formed by the variable domain of one heavy chain, together with that of its associated light chain. Thus, each immunoglobulin has two antigen binding sites with remarkable affinity for a particular antigen. The variable domains are assembled by a process called V-(D)-J rearrangement and can then be subjected to somatic hypermutations which, after exposure to antigen and selection, allow affinity maturation for a particular antigen. In Homo sapiens (Human), this protein is Immunoglobulin kappa variable 1-33.